The following is a 31-amino-acid chain: leu operon leader peptide (31 aa).

Involved in control of the biosynthesis of leucine. In Buchnera aphidicola subsp. Rhopalosiphum padi, this protein is leu operon leader peptide (leuL).